We begin with the raw amino-acid sequence, 317 residues long: tRNA dimethylallyltransferase (317 aa).

21–28 (GPTASGKS) contributes to the ATP binding site. 23–28 (TASGKS) lines the substrate pocket. An interaction with substrate tRNA region spans residues 46 to 49 (DSMQ).

This sequence belongs to the IPP transferase family. Monomer. Mg(2+) is required as a cofactor.

It carries out the reaction adenosine(37) in tRNA + dimethylallyl diphosphate = N(6)-dimethylallyladenosine(37) in tRNA + diphosphate. In terms of biological role, catalyzes the transfer of a dimethylallyl group onto the adenine at position 37 in tRNAs that read codons beginning with uridine, leading to the formation of N6-(dimethylallyl)adenosine (i(6)A). The sequence is that of tRNA dimethylallyltransferase from Nitrobacter hamburgensis (strain DSM 10229 / NCIMB 13809 / X14).